The following is a 377-amino-acid chain: tRNA(Met) cytidine acetate ligase (377 aa).

ATP contacts are provided by residues 7-20 (VVEY…HRYH), G101, N151, and R176.

It belongs to the TmcAL family.

The protein localises to the cytoplasm. The enzyme catalyses cytidine(34) in elongator tRNA(Met) + acetate + ATP = N(4)-acetylcytidine(34) in elongator tRNA(Met) + AMP + diphosphate. Functionally, catalyzes the formation of N(4)-acetylcytidine (ac(4)C) at the wobble position of elongator tRNA(Met), using acetate and ATP as substrates. First activates an acetate ion to form acetyladenylate (Ac-AMP) and then transfers the acetyl group to tRNA to form ac(4)C34. This chain is tRNA(Met) cytidine acetate ligase, found in Limosilactobacillus reuteri (strain DSM 20016) (Lactobacillus reuteri).